A 129-amino-acid chain; its full sequence is Small ribosomal subunit protein uS11 (129 aa).

The protein belongs to the universal ribosomal protein uS11 family. Part of the 30S ribosomal subunit. Interacts with proteins S7 and S18. Binds to IF-3.

In terms of biological role, located on the platform of the 30S subunit, it bridges several disparate RNA helices of the 16S rRNA. Forms part of the Shine-Dalgarno cleft in the 70S ribosome. In Bradyrhizobium sp. (strain ORS 278), this protein is Small ribosomal subunit protein uS11.